We begin with the raw amino-acid sequence, 156 residues long: Endoribonuclease YbeY (156 aa).

Positions 117, 121, and 127 each coordinate Zn(2+).

It belongs to the endoribonuclease YbeY family. Zn(2+) is required as a cofactor.

It localises to the cytoplasm. Its function is as follows. Single strand-specific metallo-endoribonuclease involved in late-stage 70S ribosome quality control and in maturation of the 3' terminus of the 16S rRNA. In Herminiimonas arsenicoxydans, this protein is Endoribonuclease YbeY.